The following is a 91-amino-acid chain: DNA-directed RNA polymerase subunit omega (91 aa).

The protein belongs to the RNA polymerase subunit omega family. In terms of assembly, the RNAP catalytic core consists of 2 alpha, 1 beta, 1 beta' and 1 omega subunit. When a sigma factor is associated with the core the holoenzyme is formed, which can initiate transcription.

It catalyses the reaction RNA(n) + a ribonucleoside 5'-triphosphate = RNA(n+1) + diphosphate. Functionally, promotes RNA polymerase assembly. Latches the N- and C-terminal regions of the beta' subunit thereby facilitating its interaction with the beta and alpha subunits. The chain is DNA-directed RNA polymerase subunit omega from Pseudoalteromonas translucida (strain TAC 125).